The chain runs to 226 residues: Endonuclease V (226 aa).

Asp-43 and Asp-109 together coordinate Mg(2+).

Belongs to the endonuclease V family. It depends on Mg(2+) as a cofactor.

The protein localises to the cytoplasm. It catalyses the reaction Endonucleolytic cleavage at apurinic or apyrimidinic sites to products with a 5'-phosphate.. Its function is as follows. DNA repair enzyme involved in the repair of deaminated bases. Selectively cleaves double-stranded DNA at the second phosphodiester bond 3' to a deoxyinosine leaving behind the intact lesion on the nicked DNA. This Kosmotoga olearia (strain ATCC BAA-1733 / DSM 21960 / TBF 19.5.1) protein is Endonuclease V.